An 882-amino-acid chain; its full sequence is Valine--tRNA ligase (882 aa).

Positions 45–55 match the 'HIGH' region motif; the sequence is PNVTGKLHLGH. The 'KMSKS' region signature appears at 519 to 523; it reads KMSKS. Lysine 522 contributes to the ATP binding site. Residues 808–882 adopt a coiled-coil conformation; sequence LADLLNVEEE…RIAEMKKIKS (75 aa).

The protein belongs to the class-I aminoacyl-tRNA synthetase family. ValS type 1 subfamily. Monomer.

It localises to the cytoplasm. It carries out the reaction tRNA(Val) + L-valine + ATP = L-valyl-tRNA(Val) + AMP + diphosphate. Its function is as follows. Catalyzes the attachment of valine to tRNA(Val). As ValRS can inadvertently accommodate and process structurally similar amino acids such as threonine, to avoid such errors, it has a 'posttransfer' editing activity that hydrolyzes mischarged Thr-tRNA(Val) in a tRNA-dependent manner. In Streptococcus pyogenes serotype M28 (strain MGAS6180), this protein is Valine--tRNA ligase.